A 308-amino-acid polypeptide reads, in one-letter code: Glutaminase (308 aa).

S66, N117, E161, N168, Y192, Y244, and V262 together coordinate substrate.

The protein belongs to the glutaminase family. In terms of assembly, homotetramer.

The catalysed reaction is L-glutamine + H2O = L-glutamate + NH4(+). The polypeptide is Glutaminase (Salmonella arizonae (strain ATCC BAA-731 / CDC346-86 / RSK2980)).